The following is a 460-amino-acid chain: Arginine biosynthesis bifunctional protein ArgJ, chloroplastic (460 aa).

A chloroplast-targeting transit peptide spans 1–26; that stretch reads MYLSVPHYPSLKFTAFQSHKRNFRVF. Substrate is bound by residues Thr202, Lys228, Thr239, Glu328, Asn455, and Thr460. The active-site Nucleophile is Thr239.

It belongs to the ArgJ family. In terms of assembly, heterodimer of an alpha and a beta chain.

The protein resides in the plastid. The protein localises to the chloroplast. The enzyme catalyses N(2)-acetyl-L-ornithine + L-glutamate = N-acetyl-L-glutamate + L-ornithine. The catalysed reaction is L-glutamate + acetyl-CoA = N-acetyl-L-glutamate + CoA + H(+). The protein operates within amino-acid biosynthesis; L-arginine biosynthesis; L-ornithine and N-acetyl-L-glutamate from L-glutamate and N(2)-acetyl-L-ornithine (cyclic): step 1/1. It functions in the pathway amino-acid biosynthesis; L-arginine biosynthesis; N(2)-acetyl-L-ornithine from L-glutamate: step 1/4. In terms of biological role, catalyzes two activities which are involved in the cyclic version of arginine biosynthesis: the synthesis of acetylglutamate from glutamate and acetyl-CoA, and of ornithine by transacetylation between acetylornithine and glutamate. The protein is Arginine biosynthesis bifunctional protein ArgJ, chloroplastic of Citrullus lanatus (Watermelon).